A 408-amino-acid chain; its full sequence is Sprouty-related, EVH1 domain-containing protein 3 (408 aa).

The 113-residue stretch at methionine 1 to leucine 113 folds into the WH1 domain. The disordered stretch occupies residues leucine 118–proline 226. Positions proline 120–serine 130 are enriched in low complexity. Residues leucine 192 to threonine 242 form the KBD domain. The residue at position 238 (arginine 238) is an Asymmetric dimethylarginine. Arginine 246 is modified (omega-N-methylarginine). The tract at residues leucine 256–serine 286 is disordered. Residues proline 265–alanine 281 are compositionally biased toward pro residues. In terms of domain architecture, SPR spans arginine 294–glutamate 405.

Interacts with palmitoyltransferase ZDHHC17/HIP14; the interaction leads to palmitoylation of SPRED3. Post-translationally, phosphorylated on tyrosine. Palmitoylated by ZDHHC17/HIP14. In terms of processing, ubiquitinated. Brain specific.

Its subcellular location is the cell membrane. In terms of biological role, tyrosine kinase substrate that inhibits growth-factor-mediated activation of MAP kinase. Inhibits fibroblast growth factor (FGF)-induced retinal lens fiber differentiation, probably by inhibiting FGF-mediated phosphorylation of ERK1/2. Inhibits TGFB-induced epithelial-to-mesenchymal transition in lens epithelial cells. This is Sprouty-related, EVH1 domain-containing protein 3 (Spred3) from Mus musculus (Mouse).